Consider the following 279-residue polypeptide: 4-hydroxy-3-methylbut-2-enyl diphosphate reductase (279 aa).

Cys12 contributes to the [4Fe-4S] cluster binding site. 2 residues coordinate (2E)-4-hydroxy-3-methylbut-2-enyl diphosphate: His40 and His72. Dimethylallyl diphosphate is bound by residues His40 and His72. 2 residues coordinate isopentenyl diphosphate: His40 and His72. Cys94 is a [4Fe-4S] cluster binding site. His122 lines the (2E)-4-hydroxy-3-methylbut-2-enyl diphosphate pocket. His122 is a binding site for dimethylallyl diphosphate. Residue His122 participates in isopentenyl diphosphate binding. The active-site Proton donor is the Glu124. Thr161 is a binding site for (2E)-4-hydroxy-3-methylbut-2-enyl diphosphate. Cys189 contributes to the [4Fe-4S] cluster binding site. Residues Ser217, Asn219, and Ser261 each contribute to the (2E)-4-hydroxy-3-methylbut-2-enyl diphosphate site. Dimethylallyl diphosphate is bound by residues Ser217, Asn219, and Ser261. Isopentenyl diphosphate is bound by residues Ser217, Asn219, and Ser261.

It belongs to the IspH family. [4Fe-4S] cluster is required as a cofactor.

It catalyses the reaction isopentenyl diphosphate + 2 oxidized [2Fe-2S]-[ferredoxin] + H2O = (2E)-4-hydroxy-3-methylbut-2-enyl diphosphate + 2 reduced [2Fe-2S]-[ferredoxin] + 2 H(+). It carries out the reaction dimethylallyl diphosphate + 2 oxidized [2Fe-2S]-[ferredoxin] + H2O = (2E)-4-hydroxy-3-methylbut-2-enyl diphosphate + 2 reduced [2Fe-2S]-[ferredoxin] + 2 H(+). The protein operates within isoprenoid biosynthesis; dimethylallyl diphosphate biosynthesis; dimethylallyl diphosphate from (2E)-4-hydroxy-3-methylbutenyl diphosphate: step 1/1. It functions in the pathway isoprenoid biosynthesis; isopentenyl diphosphate biosynthesis via DXP pathway; isopentenyl diphosphate from 1-deoxy-D-xylulose 5-phosphate: step 6/6. In terms of biological role, catalyzes the conversion of 1-hydroxy-2-methyl-2-(E)-butenyl 4-diphosphate (HMBPP) into a mixture of isopentenyl diphosphate (IPP) and dimethylallyl diphosphate (DMAPP). Acts in the terminal step of the DOXP/MEP pathway for isoprenoid precursor biosynthesis. In Syntrophotalea carbinolica (strain DSM 2380 / NBRC 103641 / GraBd1) (Pelobacter carbinolicus), this protein is 4-hydroxy-3-methylbut-2-enyl diphosphate reductase.